Here is a 441-residue protein sequence, read N- to C-terminus: Platelet-activating factor acetylhydrolase (441 aa).

An N-terminal signal peptide occupies residues 1–21; it reads MVPPKLHVLFCLCGCLAVVYP. Ser-273 (nucleophile) is an active-site residue. Catalysis depends on charge relay system residues Asp-296 and His-351. 2 N-linked (GlcNAc...) asparagine glycosylation sites follow: Asn-423 and Asn-433.

It belongs to the AB hydrolase superfamily. Lipase family. N-glycosylated. Macrophage-derived PLA2G7 carries sialylated complex-type N-glycans that hinder its binding to HDL particles. As to expression, plasma. Secreted by macrophages (at protein level).

It is found in the secreted. It localises to the extracellular space. The enzyme catalyses a 1-O-alkyl-2-acetyl-sn-glycero-3-phosphocholine + H2O = a 1-O-alkyl-sn-glycero-3-phosphocholine + acetate + H(+). It carries out the reaction 1-O-decyl-2-acetyl-sn-glycero-3-phosphocholine + H2O = 1-O-decyl-sn-glycero-3-phosphocholine + acetate + H(+). The catalysed reaction is 1-O-dodecyl-2-acetyl-sn-glycero-3-phosphocholine + H2O = 1-O-dodecyl-sn-glycero-3-phosphocholine + acetate + H(+). It catalyses the reaction 1-O-tetradecyl-2-acetyl-sn-glycero-3-phosphocholine + H2O = 1-O-tetradecyl-sn-glycero-3-phosphocholine + acetate + H(+). The enzyme catalyses 1-O-hexadecyl-2-acetyl-sn-glycero-3-phosphocholine + H2O = 1-O-hexadecyl-sn-glycero-3-phosphocholine + acetate + H(+). It carries out the reaction 1-O-octadecyl-2-acetyl-sn-glycero-3-phosphocholine + H2O = 1-O-octadecyl-sn-glycero-3-phosphocholine + acetate + H(+). The catalysed reaction is 1-hexadecanoyl-2-acetyl-sn-glycero-3-phosphocholine + H2O = 1-hexadecanoyl-sn-glycero-3-phosphocholine + acetate + H(+). It catalyses the reaction 1-hexadecanoyl-2-propionyl-sn-glycero-3-phosphocholine + H2O = propanoate + 1-hexadecanoyl-sn-glycero-3-phosphocholine + H(+). The enzyme catalyses 1-hexadecanoyl-2-butanoyl-sn-glycero-3-phosphocholine + H2O = butanoate + 1-hexadecanoyl-sn-glycero-3-phosphocholine + H(+). It carries out the reaction 1-hexadecanoyl-2-pentanoyl-sn-glycero-3-phosphocholine + H2O = pentanoate + 1-hexadecanoyl-sn-glycero-3-phosphocholine + H(+). The catalysed reaction is 1-hexadecanoyl-2-glutaroyl-sn-glycero-3-phosphocholine + H2O = glutarate + 1-hexadecanoyl-sn-glycero-3-phosphocholine + H(+). It catalyses the reaction 1-hexadecanoyl-2-(5-oxopentanoyl)-sn-glycero-3-phosphocholine + H2O = 5-oxopentanoate + 1-hexadecanoyl-sn-glycero-3-phosphocholine + H(+). The enzyme catalyses 1-hexadecanoyl-2-(9-oxononanoyl)-sn-glycero-3-phosphocholine + H2O = 9-oxononanoate + 1-hexadecanoyl-sn-glycero-3-phosphocholine + H(+). It carries out the reaction 1-hexadecanoyl-2-[9-hydroperoxy-(10E-octadecenoyl)]-sn-glycero-3-phosphocholine + H2O = 9-hydroperoxy-10E-octadecenoate + 1-hexadecanoyl-sn-glycero-3-phosphocholine + H(+). The catalysed reaction is 1-hexadecanoyl-2-(10-hydroperoxy-8E-octadecenoyl)-sn-glycero-3-phosphocholine + H2O = 10-hydroperoxy-(8E)-octadecenoate + 1-hexadecanoyl-sn-glycero-3-phosphocholine + H(+). Functionally, lipoprotein-associated calcium-independent phospholipase A2 involved in phospholipid catabolism during inflammatory and oxidative stress response. At the lipid-aqueous interface, hydrolyzes the ester bond of fatty acyl group attached at sn-2 position of phospholipids (phospholipase A2 activity). Specifically targets phospholipids with a short-chain fatty acyl group at sn-2 position. Can hydrolyze phospholipids with long fatty acyl chains, only if they carry oxidized functional groups. Hydrolyzes and inactivates platelet-activating factor (PAF, 1-O-alkyl-2-acetyl-sn-glycero-3-phosphocholine), a potent pro-inflammatory signaling lipid that acts through PTAFR on various innate immune cells. Hydrolyzes oxidatively truncated phospholipids carrying an aldehyde group at omega position, preventing their accumulation in low-density lipoprotein (LDL) particles and uncontrolled pro-inflammatory effects. As part of high-density lipoprotein (HDL) particles, can hydrolyze phospholipids having long-chain fatty acyl hydroperoxides at sn-2 position and protect against potential accumulation of these oxylipins in the vascular wall. Catalyzes the release from membrane phospholipids of F2-isoprostanes, lipid biomarkers of cellular oxidative damage. The polypeptide is Platelet-activating factor acetylhydrolase (PLA2G7) (Homo sapiens (Human)).